The following is an 89-amino-acid chain: Large ribosomal subunit protein eL34 (89 aa).

A disordered region spans residues 1–29 (MSAPRFRNGTFKRTLKRVPGGRKVEHYKK). Positions 13-29 (RTLKRVPGGRKVEHYKK) are enriched in basic residues.

This sequence belongs to the eukaryotic ribosomal protein eL34 family.

The sequence is that of Large ribosomal subunit protein eL34 from Methanosphaera stadtmanae (strain ATCC 43021 / DSM 3091 / JCM 11832 / MCB-3).